A 3021-amino-acid polypeptide reads, in one-letter code: Genome polyprotein (3021 aa).

Ser2 carries the N-acetylserine; by host modification. Positions 2-23 (STLPKPQRKTKRNTIRRPQDVK) are interaction with STAT1. Positions 2–58 (STLPKPQRKTKRNTIRRPQDVKFPGGGVIYVGVYVLPRRGPRLGVRATRKTSERSQP) are interaction with EIF2AK2/PKR. The tract at residues 2–59 (STLPKPQRKTKRNTIRRPQDVKFPGGGVIYVGVYVLPRRGPRLGVRATRKTSERSQPR) is interaction with DDX3X. The segment at 2–75 (STLPKPQRKT…PKARRSEGRS (74 aa)) is disordered. Over 2-168 (STLPKPQRKT…EDGINFATGN (167 aa)) the chain is Cytoplasmic. Short sequence motifs (nuclear localization signal) lie at residues 5 to 13 (PKPQRKTKR) and 38 to 43 (PRRGPR). A compositionally biased stretch (basic residues) spans 7-16 (PQRKTKRNTI). A Phosphoserine; by host modification is found at Ser53. Short sequence motifs (nuclear localization signal) lie at residues 58–64 (PRGRRKP) and 66–71 (PKARRS). Basic residues predominate over residues 58–68 (PRGRRKPIPKA). 2 positions are modified to phosphoserine; by host: Ser99 and Ser116. The segment at 112 to 152 (PRRRSRNLGKVIDTLTCGFADLMGYIPLVGAPLGGAARALA) is important for endoplasmic reticulum and mitochondrial localization. Residues 122 to 173 (VIDTLTCGFADLMGYIPLVGAPLGGAARALAHGVRALEDGINFATGNLPGCS) form an interaction with APOA2 region. Residues 164-167 (FATG) are important for lipid droplets localization. A helical membrane pass occupies residues 169 to 189 (LPGCSFSIFLLALFSCLIHPA). A propeptide spans 178-191 (LLALFSCLIHPAAS) (ER anchor for the core protein, removed in mature form by host signal peptidase). Over 190–358 (ASLEWRNTSG…AGAHWGIIAG (169 aa)) the chain is Lumenal. Residues Asn196, Asn209, and Asn234 are each glycosylated (N-linked (GlcNAc...) asparagine; by host). Residues 265-296 (LVGAGTMCSALYVGDMCGPVFLVGQAFTFRPR) form an important for fusion region. Asn305 carries an N-linked (GlcNAc...) asparagine; by host glycan. The helical transmembrane segment at 359-379 (LAYYSMQGNWAKVAIIMVMFS) threads the bilayer. The Lumenal portion of the chain corresponds to 380–731 (GVDASTHVTA…WEFVILIFLL (352 aa)). The HVR1 stretch occupies residues 385–412 (THVTAGQAARNAYGITSLFSVGAKQNLQ). Asn417, Asn423, and Asn430 each carry an N-linked (GlcNAc...) (high mannose) asparagine; by host glycan. Cystine bridges form between Cys429–Cys553, Cys452–Cys459, Cys487–Cys495, and Cys504–Cys509. An N-linked (GlcNAc...) asparagine; by host glycan is attached at Asn448. The segment at 475-479 (ANITG) is HVR2. Asn476 carries N-linked (GlcNAc...) asparagine; by host glycosylation. A CD81-binding 1 region spans residues 481–494 (SDDKPYCWHYAPRP). Asn533 is a glycosylation site (N-linked (GlcNAc...) asparagine; by host). The tract at residues 545-552 (PPSGRWFG) is CD81-binding 2. N-linked (GlcNAc...) asparagine; by host glycosylation occurs at Asn557. 4 cysteine pairs are disulfide-bonded: Cys565-Cys570, Cys587-Cys591, Cys603-Cys626, and Cys613-Cys650. Asn629 and Asn651 each carry an N-linked (GlcNAc...) (high mannose) asparagine; by host glycan. Residues Cys658 and Cys683 are joined by a disulfide bond. The PKR/eIF2-alpha phosphorylation homology domain (PePHD) stretch occupies residues 666 to 677 (SEQHPLLHSTTE). The helical transmembrane segment at 732–752 (LADARVCVALWLILTISQAEA) threads the bilayer. The Lumenal portion of the chain corresponds to 753 to 763 (ALENLVTLNAV). A helical membrane pass occupies residues 764 to 784 (AAAGTHGIGWYLVAFCAAWYV). Residues 785-787 (RGK) lie on the Cytoplasmic side of the membrane. A helical membrane pass occupies residues 788 to 809 (LVPLVTYSLTGLWSLALLVLLL). Over 810–819 (PQRAYAWSGE) the chain is Lumenal. The helical transmembrane segment at 820-840 (DSATLGAGILVLFGFFTLSPW) threads the bilayer. Residues 841-844 (YKHW) are Cytoplasmic-facing. The chain crosses the membrane as a helical span at residues 845–864 (IARLIWWNQYTICRCESALH). At 865–887 (VWVPPLLARGGRDGVILLTSLLY) the chain is on the lumenal side. The chain crosses the membrane as a helical span at residues 888–908 (PSLIFDITKLLIAALGPLYLI). In terms of domain architecture, Peptidase C18 spans 905-1032 (LYLIQATITA…DYREMGWRLL (128 aa)). Residues 909–1663 (QATITATPYF…CMSADLEVTT (755 aa)) are Cytoplasmic-facing. The tract at residues 910–1212 (ATITATPYFV…PVETLSTQAR (303 aa)) is protease NS2-3. Residue Cys928 is the site of S-palmitoyl cysteine; by host attachment. The segment at 935 to 955 (MGGKYFQMIILSLADGSNTYL) is interaction with host SCPS1. Active-site for protease NS2 activity; shared with dimeric partner residues include His958, Glu978, and Cys999. A Peptidase S29 domain is found at 1033 to 1214 (APITAYAQQT…ETLSTQARSP (182 aa)). Catalysis depends on charge relay system; for serine protease NS3 activity residues His1089 and Asp1113. Cys1129 and Cys1131 together coordinate Zn(2+). Ser1171 functions as the Charge relay system; for serine protease NS3 activity in the catalytic mechanism. Zn(2+)-binding residues include Cys1177 and His1181. The region spanning 1223–1375 (PAVPQSYQVG…SNIEEVALGS (153 aa)) is the Helicase ATP-binding domain. Position 1236–1243 (1236–1243 (APTGSGKS)) interacts with ATP. Residue Ser1243 participates in Mg(2+) binding. Residues 1322–1325 (DDCH) carry the DECH box motif. The Helicase C-terminal domain occupies 1382-1544 (YGKAIPIACI…DLQPAETTVR (163 aa)). The tract at residues 1492-1504 (QRRGRTGRGRLGT) is RNA-binding. Residues 1664 to 1684 (STWVLLGGVLAAVAAYCLSVG) traverse the membrane as a helical segment. The interval 1685-1696 (CVVIVGHIELGG) is NS3-binding. Residues 1685–1811 (CVVIVGHIEL…SVTSPLTTNQ (127 aa)) lie on the Cytoplasmic side of the membrane. The chain crosses the membrane as a helical span at residues 1812–1830 (TMFFNILGGWVATHLAGPQ). Residues 1831–1834 (ASSA) are Lumenal-facing. The helical transmembrane segment at 1835 to 1855 (FVVSGLAGAAIGGIGLGRVLL) threads the bilayer. A topological domain (cytoplasmic) is located at residue Asp1856. The helical transmembrane segment at 1857-1877 (ILAGYGAGVSGALVAFKIMGG) threads the bilayer. At 1878-1887 (EPPTTEDMVN) the chain is on the lumenal side. The chain crosses the membrane as a helical span at residues 1888-1908 (LLPAILSPGALVVGVICAAIL). At 1909–1978 (RRHVGPGEGP…WINEDYPSPC (70 aa)) the chain is on the cytoplasmic side. Cys1978 carries S-palmitoyl cysteine; by host lipidation. Residues 1979 to 2008 (SGDWLRIIWDWVCSVVSDFKTWLSAKIMPA) lie within the membrane without spanning it. The Cytoplasmic segment spans residues 2009 to 3000 (LPGLPFISCQ…YHSVSRARTR (992 aa)). Residues Cys2017, Cys2035, Cys2037, and Cys2058 each contribute to the Zn(2+) site. The FKBP8-binding stretch occupies residues 2126–2214 (EFFTEVDGVR…ASSSASQLSA (89 aa)). A transcriptional activation region spans residues 2126 to 2338 (EFFTEVDGVR…PVPPPRRKRT (213 aa)). Residues 2141-2145 (PPCRP) are interaction with non-structural protein 4A. Residues 2193–2215 (ARRLARGSPPSEASSSASQLSAP) are disordered. The tract at residues 2195-2448 (RLARGSPPSE…ALITPCSAEE (254 aa)) is interaction with host SKP2. A phosphoserine; by host mark is found at Ser2200, Ser2203, Ser2207, Ser2210, Ser2213, and Ser2216. Positions 2200–2215 (SPPSEASSSASQLSAP) are enriched in low complexity. An ISDR region spans residues 2216-2255 (SLKATCQTHRPHPDAELVDANLLWRQEMGSNITRVESETK). Residues 2216–2281 (SLKATCQTHR…AELSAAAECF (66 aa)) form an interaction with EIF2AK2/PKR region. Residues 2255 to 2312 (KVVILDSFEPLRAETDDAELSAAAECFKKPPKYPPALPIWARPDYNPPLLDRWKSPDY) form an NS4B-binding region. The interval 2305 to 2383 (DRWKSPDYVP…DTQSSTASKV (79 aa)) is V3. Disordered stretches follow at residues 2318–2338 (HGCALPPKGAPPVPPPRRKRT) and 2356–2419 (KSFP…WSTV). Residues 2328–2331 (PPVP) carry the SH3-binding motif. Positions 2333–2341 (PRRKRTIQL) match the Nuclear localization signal motif. Lys2356 participates in a covalent cross-link: Glycyl lysine isopeptide (Lys-Gly) (interchain with G-Cter in ubiquitin). The span at 2359–2381 (PSSKPQEENSSSSGVDTQSSTAS) shows a compositional bias: low complexity. Phosphoserine; by host is present on residues Ser2459 and Ser2472. The RdRp catalytic domain occupies 2644-2762 (PLGFSYDTRC…VAESDGVDED (119 aa)). The Mg(2+) site is built by Asp2650, Asp2748, and Asp2749. A helical membrane pass occupies residues 3001–3021 (YLLLCLLLLTVGVGIFLLPAR).

It belongs to the hepacivirus polyprotein family. Homooligomer. Interacts with E1 (via C-terminus). Interacts with the non-structural protein 5A. Interacts (via N-terminus) with host STAT1 (via SH2 domain); this interaction results in decreased STAT1 phosphorylation and ubiquitin-mediated proteasome-dependent STAT1 degradation, leading to decreased IFN-stimulated gene transcription. Interacts with host STAT3; this interaction constitutively activates STAT3. Interacts with host LTBR receptor. Interacts with host TNFRSF1A receptor and possibly induces apoptosis. Interacts with host HNRPK. Interacts with host YWHAE. Interacts with host UBE3A/E6AP. Interacts with host DDX3X. Interacts with host APOA2. Interacts with host RXRA protein. Interacts with host SP110 isoform 3/Sp110b; this interaction sequesters the transcriptional corepressor SP110 away from the nucleus. Interacts with host CREB3 nuclear transcription protein; this interaction triggers cell transformation. Interacts with host ACY3. Interacts with host C1QR1. Interacts with host RBM24; this interaction, which enhances the interaction of the mature core protein with 5'-UTR, may inhibit viral translation and favor replication. Interacts with host EIF2AK2/PKR; this interaction induces the autophosphorylation of EIF2AK2. Part of the viral assembly initiation complex composed of NS2, E1, E2, NS3, NS4A, NS5A and the mature core protein. In terms of assembly, forms a heterodimer with envelope glycoprotein E2. Interacts with mature core protein. Interacts with protease NS2. The heterodimer E1/E2 interacts with host CLDN1; this interaction plays a role in viral entry into host cell. Interacts with host SPSB2 (via C-terminus). Part of the viral assembly initiation complex composed of NS2, E1, E2, NS3, NS4A, NS5A and the mature core protein. Interacts with host NEURL3; this interaction prevents E1 binding to glycoprotein E2. As to quaternary structure, forms a heterodimer with envelope glycoprotein E1. Interacts with host CD81 and SCARB1 receptors; these interactions play a role in viral entry into host cell. Interacts with host EIF2AK2/PKR; this interaction inhibits EIF2AK2 and probably allows the virus to evade the innate immune response. Interacts with host CD209/DC-SIGN and CLEC4M/DC-SIGNR. Interact with host SPCS1; this interaction is essential for viral particle assembly. Interacts with protease NS2. The heterodimer E1/E2 interacts with host CLDN1; this interaction plays a role in viral entry into host cell. Part of the viral assembly initiation complex composed of NS2, E1, E2, NS3, NS4A, NS5A and the mature core protein. Interacts with host SLC3A2/4F2hc; the interaction may facilitate viral entry into host cell. Interacts with human PLSCR1. Homohexamer. Homoheptamer. Interacts with protease NS2. In terms of assembly, homodimer. Interacts with host SPCS1; this interaction is essential for viral particle assembly. Interacts with envelope glycoprotein E1. Interacts with envelope glycoprotein E2. Interacts with viroporin p7. Interacts with serine protease/helicase NS3. Part of the replication complex composed of NS2, NS3, NS4A, NS4B, NS5A and the RNA-directed RNA polymerase embedded in an ER-derived membranous web. Part of the viral assembly initiation complex composed of NS2, E1, E2, NS3, NS4A, NS5A and the mature core protein. As to quaternary structure, interacts with protease NS2. Interacts with non-structural protein 4A; this interaction stabilizes the folding of NS3 serine protease. NS3-NS4A interaction is essential for NS3 activation and allows membrane anchorage of the latter. NS3/NS4A complex also prevents phosphorylation of host IRF3, thus preventing the establishment of dsRNA induced antiviral state. Interacts with host MAVS; this interaction leads to the cleavage and inhibition of host MAVS. Interacts with host TICAM1; this interaction leads to the cleavage and inhibition of host TICAM1. Interacts with host TANK-binding kinase/TBK1; this interaction results in the inhibition of the association between TBK1 and IRF3, which leads to the inhibition of IRF3 activation. Interacts with host RBM24. Part of the replication complex composed of NS2, NS3, NS4A, NS4B, NS5A and the RNA-directed RNA polymerase embedded in an ER-derived membranous web. Part of the viral assembly initiation complex composed of NS2, E1, E2, NS3, NS4A, NS5A and the mature core protein. Interacts with NS3 serine protease; this interaction stabilizes the folding of NS3 serine protease. NS3-NS4A interaction is essential for NS3 activation and allows membrane anchorage of the latter. Interacts with non-structural protein 5A (via N-terminus). Part of the replication complex composed of NS2, NS3, NS4A, NS4B, NS5A and the RNA-directed RNA polymerase embedded in an ER-derived membranous web. Part of the viral assembly initiation complex composed of NS2, E1, E2, NS3, NS4A, NS5A and the mature core protein. In terms of assembly, homomultimer. Interacts with non-structural protein NS5A. Interacts with host PLA2G4C; this interaction likely initiates the recruitment of replication complexes to lipid droplets. Interacts with host STING; this interaction disrupts the interaction between STING and TBK1 thereby suppressing the interferon signaling. Part of the replication complex composed of NS2, NS3, NS4A, NS4B, NS5A and the RNA-directed RNA polymerase embedded in an ER-derived membranous web. As to quaternary structure, monomer. Homodimer; dimerization is required for RNA-binding. Interacts with the mature core protein. Interacts (via N-terminus) with non-structural protein 4A. Interacts with non-structural protein 4B. Interacts (via region D2) with RNA-directed RNA polymerase. Part of the viral assembly initiation complex composed of NS2, E1, E2, NS3, NS4A, NS5A and the mature core protein. Part of the replication complex composed of NS2, NS3, NS4A, NS4B, NS5A and the RNA-directed RNA polymerase embedded in an ER-derived membranous web. Interacts with host GRB2. Interacts with host BIN1. Interacts with host PIK3R1. Interacts with host SRCAP. Interacts with host FKBP8. Interacts (via C-terminus) with host VAPB (via MSP domain). Interacts with host EIF2AK2/PKR; this interaction leads to disruption of EIF2AK2 dimerization by NS5A and probably allows the virus to evade the innate immune response. Interacts (via N-terminus) with host PACSIN2 (via N-terminus); this interaction attenuates protein kinase C alpha-mediated phosphorylation of PACSIN2 by disrupting the interaction between PACSIN2 and PRKCA. Interacts (via N-terminus) with host SRC kinase (via SH2 domain). Interacts with most Src-family kinases. Interacts with host IFI27 and SKP2; promotes the ubiquitin-mediated proteasomal degradation of NS5A. Interacts with host GPS2. Interacts with host TNFRSF21; this interaction allows the modulation by the virus of JNK, p38 MAPK, STAT3, and Akt signaling pathways in a DR6-dependent manner. Interacts (via N-terminus) with host CIDEB (via N-terminus); this interaction seems to regulate the association of HCV particles with APOE. Interacts with host CHKA/Choline Kinase-alpha; CHKA bridges host PI4KA and NS5A and potentiates NS5A-stimulated PI4KA activity, which then facilitates the targeting of the ternary complex to the ER for viral replication. Interacts with host SPSB2 (via C-terminus); this interaction targets NS5A for ubiquitination and degradation. Interacts with host RAB18; this interaction may promote the association of NS5A and other replicase components with lipid droplets. Interacts (via region D2) with host PPIA/CYPA; the interaction stimulates RNA-binding ability of NS5A and is dependent on the peptidyl-prolyl cis-trans isomerase activity of PPIA/CYPA. Interacts with host TRIM14; this interaction induces the degradation of NS5A. Homooligomer. Interacts with non-structural protein 5A. Interacts with host VAPB. Interacts with host PRK2/PKN2. Interacts with host HNRNPA1 and SEPT6; these interactions facilitate viral replication. Part of the replication complex composed of NS2, NS3, NS4A, NS4B, NS5A and the RNA-directed RNA polymerase. Requires Zn(2+) as cofactor. It depends on Mg(2+) as a cofactor. Post-translationally, specific enzymatic cleavages in vivo yield mature proteins. The structural proteins, core, E1, E2 and p7 are produced by proteolytic processing by host signal peptidases. The core protein precursor is synthesized as a 23 kDa, which is retained in the ER membrane through the hydrophobic signal peptide. Cleavage by the signal peptidase releases the 21 kDa mature core protein. The cleavage of the core protein precursor occurs between aminoacids 176 and 188 but the exact cleavage site is not known. Some degraded forms of the core protein appear as well during the course of infection. The other proteins (p7, NS2, NS3, NS4A, NS4B, NS5A and NS5B) are cleaved by the viral proteases. Autoprocessing between NS2 and NS3 is mediated by the NS2 cysteine protease catalytic domain and regulated by the NS3 N-terminal domain. In terms of processing, phosphorylated by host PKC and PKA. Ubiquitinated; mediated by UBE3A and leading to core protein subsequent proteasomal degradation. Post-translationally, highly N-glycosylated. In terms of processing, palmitoylation is required for NS2/3 autoprocessing and E2 recruitment to membranes. Palmitoylated. This modification may play a role in its polymerization or in protein-protein interactions. Post-translationally, phosphorylated on serines in a basal form termed p56. p58 is a hyperphosphorylated form of p56. p56 and p58 coexist in the cell in roughly equivalent amounts. Hyperphosphorylation is dependent on the presence of NS4A. Host CSNK1A1/CKI-alpha or RPS6KB1 kinases may be responsible for NS5A phosphorylation. In terms of processing, tyrosine phosphorylation is essential for the interaction with host SRC. Ubiquitinated. Ubiquitination, most probably at Lys-2356, mediated by host IFI27 and SKP2 leads to proteasomal degradation, restricting viral infection. Ubiquitination by host TRIM22 leads to interruption of viral replication. Post-translationally, the N-terminus is phosphorylated by host PRK2/PKN2.

It is found in the host endoplasmic reticulum membrane. It localises to the host mitochondrion membrane. The protein resides in the virion. The protein localises to the host cytoplasm. Its subcellular location is the host nucleus. It is found in the host lipid droplet. It localises to the virion membrane. The protein resides in the host mitochondrion. The protein localises to the host cell membrane. Its subcellular location is the host perinuclear region. The enzyme catalyses Hydrolysis of four peptide bonds in the viral precursor polyprotein, commonly with Asp or Glu in the P6 position, Cys or Thr in P1 and Ser or Ala in P1'.. The catalysed reaction is a ribonucleoside 5'-triphosphate + H2O = a ribonucleoside 5'-diphosphate + phosphate + H(+). It carries out the reaction ATP + H2O = ADP + phosphate + H(+). It catalyses the reaction RNA(n) + a ribonucleoside 5'-triphosphate = RNA(n+1) + diphosphate. Its activity is regulated as follows. Inhibited by the antiviral drug hexamethylene amiloride. Inhibition by amantadine appears to be genotype-dependent. Also inhibited by long-alkyl-chain iminosugar derivatives. With respect to regulation, activity is up-regulated by PRK2/PKN2-mediated phosphorylation. Packages viral RNA to form a viral nucleocapsid, and promotes virion budding. Participates in the viral particle production as a result of its interaction with the non-structural protein 5A. Binds RNA and may function as a RNA chaperone to induce the RNA structural rearrangements taking place during virus replication. Modulates viral translation initiation by interacting with viral IRES and 40S ribosomal subunit. Affects various cell signaling pathways, host immunity and lipid metabolism. Prevents the establishment of cellular antiviral state by blocking the interferon-alpha/beta (IFN-alpha/beta) and IFN-gamma signaling pathways and by blocking the formation of phosphorylated STAT1 and promoting ubiquitin-mediated proteasome-dependent degradation of STAT1. Activates STAT3 leading to cellular transformation. Regulates the activity of cellular genes, including c-myc and c-fos. May repress the promoter of p53, and sequester CREB3 and SP110 isoform 3/Sp110b in the cytoplasm. Represses cell cycle negative regulating factor CDKN1A, thereby interrupting an important check point of normal cell cycle regulation. Targets transcription factors involved in the regulation of inflammatory responses and in the immune response: suppresses TNF-induced NF-kappa-B activation, and activates AP-1. Binds to dendritic cells (DCs) via C1QR1, resulting in down-regulation of T-lymphocytes proliferation. Alters lipid metabolism by interacting with hepatocellular proteins involved in lipid accumulation and storage. Induces up-regulation of FAS promoter activity, and thereby contributes to the increased triglyceride accumulation in hepatocytes (steatosis). In terms of biological role, forms a heterodimer with envelope glycoprotein E2, which mediates virus attachment to the host cell, virion internalization through clathrin-dependent endocytosis and fusion with host membrane. Fusion with the host cell is most likely mediated by both E1 and E2, through conformational rearrangements of the heterodimer required for fusion rather than a classical class II fusion mechanism. E1/E2 heterodimer binds host apolipoproteins such as APOB and ApoE thereby forming a lipo-viro-particle (LVP). APOE associated to the LVP allows the initial virus attachment to cell surface receptors such as the heparan sulfate proteoglycans (HSPGs), syndecan-1 (SDC1), syndecan-1 (SDC2), the low-density lipoprotein receptor (LDLR) and scavenger receptor class B type I (SCARB1). The cholesterol transfer activity of SCARB1 allows E2 exposure and binding of E2 to SCARB1 and the tetraspanin CD81. E1/E2 heterodimer binding on CD81 activates the epithelial growth factor receptor (EGFR) signaling pathway. Diffusion of the complex E1-E2-EGFR-SCARB1-CD81 to the cell lateral membrane allows further interaction with Claudin 1 (CLDN1) and occludin (OCLN) to finally trigger HCV entry. Functionally, forms a heterodimer with envelope glycoprotein E1, which mediates virus attachment to the host cell, virion internalization through clathrin-dependent endocytosis and fusion with host membrane. Fusion with the host cell is most likely mediated by both E1 and E2, through conformational rearrangements of the heterodimer required for fusion rather than a classical class II fusion mechanism. The interaction between envelope glycoprotein E2 and host apolipoprotein E/APOE allows the proper assembly, maturation and infectivity of the viral particles. This interaction is probably promoted via the up-regulation of cellular autophagy by the virus. E1/E2 heterodimer binds host apolipoproteins such as APOB and APOE thereby forming a lipo-viro-particle (LVP). APOE associated to the LVP allows the initial virus attachment to cell surface receptors such as the heparan sulfate proteoglycans (HSPGs), syndecan-1 (SDC1), syndecan-1 (SDC2), the low-density lipoprotein receptor (LDLR) and scavenger receptor class B type I (SCARB1). The cholesterol transfer activity of SCARB1 allows E2 exposure and binding of E2 to SCARB1 and the tetraspanin CD81. E1/E2 heterodimer binding on CD81 activates the epithelial growth factor receptor (EGFR) signaling pathway. Diffusion of the complex E1-E2-EGFR-SCARB1-CD81 to the cell lateral membrane allows further interaction with Claudin 1 (CLDN1) and occludin (OCLN) to finally trigger HCV entry. Inhibits host EIF2AK2/PKR activation, preventing the establishment of an antiviral state. Viral ligand for CD209/DC-SIGN and CLEC4M/DC-SIGNR, which are respectively found on dendritic cells (DCs), and on liver sinusoidal endothelial cells and macrophage-like cells of lymph node sinuses. These interactions allow the capture of circulating HCV particles by these cells and subsequent facilitated transmission to permissive cells such as hepatocytes and lymphocyte subpopulations. The interaction between E2 and host amino acid transporter complex formed by SLC3A2 and SLC7A5/LAT1 may facilitate viral entry into host cell. Its function is as follows. Ion channel protein that acts as a viroporin and plays an essential role in the assembly, envelopment and secretion of viral particles. Regulates the host cell secretory pathway, which induces the intracellular retention of viral glycoproteins and favors assembly of viral particles. Creates a pore in acidic organelles and releases Ca(2+) and H(+) in the cytoplasm of infected cells, leading to a productive viral infection. High levels of cytoplasmic Ca(2+) may trigger membrane trafficking and transport of viral ER-associated proteins to viroplasms, sites of viral genome replication. This ionic imbalance induces the assembly of the inflammasome complex, which triggers the maturation of pro-IL-1beta into IL-1beta through the action of caspase-1. Targets also host mitochondria and induces mitochondrial depolarization. In addition of its role as a viroporin, acts as a lipid raft adhesion factor. Cysteine protease required for the proteolytic auto-cleavage between the non-structural proteins NS2 and NS3. The N-terminus of NS3 is required for the function of NS2 protease (active region NS2-3). Promotes the initiation of viral particle assembly by mediating the interaction between structural and non-structural proteins. In terms of biological role, displays three enzymatic activities: serine protease with a chymotrypsin-like fold, NTPase and RNA helicase. NS3 serine protease, in association with NS4A, is responsible for the cleavages of NS3-NS4A, NS4A-NS4B, NS4B-NS5A and NS5A-NS5B. The NS3/NS4A complex prevents phosphorylation of host IRF3, thus preventing the establishment of dsRNA induced antiviral state. The NS3/NS4A complex induces host amino acid transporter component SLC3A2, thus contributing to HCV propagation. NS3 RNA helicase binds to RNA and unwinds both dsDNA and dsRNA in the 3' to 5' direction, and likely resolves RNA complicated stable secondary structures in the template strand. Binds a single ATP and catalyzes the unzipping of a single base pair of dsRNA. Inhibits host antiviral proteins TBK1 and IRF3 thereby preventing the establishment of an antiviral state. Cleaves host MAVS/CARDIF thereby preventing the establishment of an antiviral state. Cleaves host TICAM1/TRIF, thereby disrupting TLR3 signaling and preventing the establishment of an antiviral state. Functionally, peptide cofactor which forms a non-covalent complex with the N-terminal of NS3 serine protease. The NS3/NS4A complex prevents phosphorylation of host IRF3, thus preventing the establishment of dsRNA induced antiviral state. The NS3/NS4A complex induces host amino acid transporter component SLC3A2, thus contributing to HCV propagation. Its function is as follows. Induces a specific membrane alteration that serves as a scaffold for the virus replication complex. This membrane alteration gives rise to the so-called ER-derived membranous web that contains the replication complex. NS4B self-interaction contributes to its function in membranous web formation. Promotes host TRIF protein degradation in a CASP8-dependent manner thereby inhibiting host TLR3-mediated interferon signaling. Disrupts the interaction between STING and TBK1 contributing to the inhibition of interferon signaling. Phosphorylated protein that is indispensable for viral replication and assembly. Both hypo- and hyperphosphorylated states are required for the viral life cycle. The hyperphosphorylated form of NS5A is an inhibitor of viral replication. Involved in RNA-binding and especially in binding to the viral genome. Zinc is essential for RNA-binding. Participates in the viral particle production as a result of its interaction with the mature viral core protein. Its interaction with host VAPB may target the viral replication complex to vesicles. Down-regulates viral IRES translation initiation. Mediates interferon resistance, presumably by interacting with and inhibiting host EIF2AK2/PKR. Prevents BIN1-induced apoptosis. Acts as a transcriptional activator of some host genes important for viral replication when localized in the nucleus. Via the interaction with host PACSIN2, modulates lipid droplet formation in order to promote virion assembly. Modulates TNFRSF21/DR6 signaling pathway for viral propagation. In terms of biological role, RNA-dependent RNA polymerase that performs primer-template recognition and RNA synthesis during viral replication. Initiates RNA transcription/replication at a flavin adenine dinucleotide (FAD), resulting in a 5'- FAD cap on viral RNAs. In this way, recognition of viral 5' RNA by host pattern recognition receptors can be bypassed, thereby evading activation of antiviral pathways. The sequence is that of Genome polyprotein from Homo sapiens (Human).